A 621-amino-acid polypeptide reads, in one-letter code: 1-deoxy-D-xylulose-5-phosphate synthase (621 aa).

Residues H80 and 121-123 contribute to the thiamine diphosphate site; that span reads GHS. A Mg(2+)-binding site is contributed by D152. Thiamine diphosphate-binding positions include 153–154, N181, Y288, and E370; that span reads GA. N181 provides a ligand contact to Mg(2+).

It belongs to the transketolase family. DXPS subfamily. In terms of assembly, homodimer. The cofactor is Mg(2+). Thiamine diphosphate is required as a cofactor.

It catalyses the reaction D-glyceraldehyde 3-phosphate + pyruvate + H(+) = 1-deoxy-D-xylulose 5-phosphate + CO2. It participates in metabolic intermediate biosynthesis; 1-deoxy-D-xylulose 5-phosphate biosynthesis; 1-deoxy-D-xylulose 5-phosphate from D-glyceraldehyde 3-phosphate and pyruvate: step 1/1. Its function is as follows. Catalyzes the acyloin condensation reaction between C atoms 2 and 3 of pyruvate and glyceraldehyde 3-phosphate to yield 1-deoxy-D-xylulose-5-phosphate (DXP). This is 1-deoxy-D-xylulose-5-phosphate synthase from Vibrio vulnificus (strain CMCP6).